A 209-amino-acid polypeptide reads, in one-letter code: Regulator of G-protein signaling 1 (209 aa).

Residues 19–42 (FSASPKDSKEHSHSLLDDKKQKKR) are disordered. The segment covering 24–38 (KDSKEHSHSLLDDKK) has biased composition (basic and acidic residues). The region spanning 85-200 (SLEKLLANQT…LKSNIYLNLL (116 aa)) is the RGS domain.

As to quaternary structure, interacts with GNAI1 and GNAQ. In terms of tissue distribution, detected in spleen, lymph node and intestine.

It is found in the cell membrane. The protein localises to the cytoplasm. Its subcellular location is the cytosol. Regulates G protein-coupled receptor signaling cascades, including signaling downstream of the N-formylpeptide chemoattractant receptors and leukotriene receptors. Inhibits B cell chemotaxis toward CXCL12. Inhibits signal transduction by increasing the GTPase activity of G protein alpha subunits thereby driving them into their inactive GDP-bound form. This Mus musculus (Mouse) protein is Regulator of G-protein signaling 1 (Rgs1).